The following is a 773-amino-acid chain: Elongin-A (773 aa).

The 76-residue stretch at 4–79 folds into the TFIIS N-terminal domain; it reads ESALQVVEKL…AQWKKLVPVE (76 aa). The segment covering 79–93 has biased composition (basic and acidic residues); that stretch reads ERNNEAEDQDFEKSN. The interval 79 to 480 is disordered; that stretch reads ERNNEAEDQD…PRKVPTDVLP (402 aa). Residues 112-124 show a composition bias toward polar residues; it reads YQESWQASGSQPY. Residues 136–156 show a composition bias toward basic and acidic residues; sequence LPELERPHKVAHGHERRDERK. The segment covering 162–174 has biased composition (low complexity); the sequence is SPPYSSDPESSDY. The residue at position 195 (serine 195) is a Phosphoserine. Positions 239 to 248 are enriched in basic residues; sequence KPHKSSHKEK. Composition is skewed to basic and acidic residues over residues 249-265 and 271-304; these read RPVDARGDEKSSVMGRE and SSKEESRRLLSEDSAKEKLPSSVVKKEKDREGNS. Serine 310 is subject to Phosphoserine. Composition is skewed to basic and acidic residues over residues 317–339 and 368–380; these read SDNHFKKPKHKDSEKIKSDKNKQ and QEGKVRTNSDRKS. Phosphoserine occurs at positions 380 and 383. Residue lysine 430 is modified to N6-acetyllysine. A Phosphoserine modification is found at serine 515. Positions 521–680 are activation domain; that stretch reads EAGFTGRRMN…PPRDVRRRQE (160 aa). Positions 549-558 are BC-box; the sequence is TLHQQCIRVL. The F-box domain maps to 565–609; sequence IFEVGGVPYSVLEPVLERCTPDQLYRIEECNHVLIEETDQLWKVH. Residues 671 to 747 form a disordered region; the sequence is PPRDVRRRQE…VASSSVSYDP (77 aa). Residues 704-718 show a composition bias toward low complexity; that stretch reads SSHVPASNSSSSFHS. Positions 728–744 are enriched in polar residues; the sequence is PSTSSAHLAPVASSSVS.

Heterotrimer of an A (ELOA, ELOA2 or ELOA3P), ELOB and ELOC subunit. Part of a multisubunit ubiquitin ligase complex consisting of elongin BC complex (ELOB and ELOC), elongin A/ELOA, RBX1 and CUL5. Interacts with ERCC6; the interaction is induced by DNA damaging agents or inhibitors of RNA polymerase II elongation. Interacts (via BC-box) with CUL5.

It localises to the nucleus. Its function is as follows. SIII, also known as elongin, is a general transcription elongation factor that increases the RNA polymerase II transcription elongation past template-encoded arresting sites. Subunit A is transcriptionally active and its transcription activity is strongly enhanced by binding to the dimeric complex of the SIII regulatory subunits B and C (elongin BC complex). As part of a multisubunit complex composed of elongin BC complex (ELOB and ELOC), elongin A/ELOA, RBX1 and CUL5; polyubiquitinates monoubiquitinated POLR2A. The sequence is that of Elongin-A (Eloa) from Rattus norvegicus (Rat).